Reading from the N-terminus, the 693-residue chain is Polyribonucleotide nucleotidyltransferase (693 aa).

Mg(2+) contacts are provided by D489 and D495. In terms of domain architecture, KH spans 556 to 615 (PQIHVMNINPAKIKDVVGRGGATVKGIVEKTGAQIDTSDSGEVKVFAKDKKSMDMAVAMI). An S1 motif domain is found at 625-693 (GQVYKGKIVK…GRVKLSLVAR (69 aa)).

Belongs to the polyribonucleotide nucleotidyltransferase family. Component of the RNA degradosome, which is a multiprotein complex involved in RNA processing and mRNA degradation. Mg(2+) is required as a cofactor.

The protein localises to the cytoplasm. It catalyses the reaction RNA(n+1) + phosphate = RNA(n) + a ribonucleoside 5'-diphosphate. Its function is as follows. Involved in mRNA degradation. Catalyzes the phosphorolysis of single-stranded polyribonucleotides processively in the 3'- to 5'-direction. This chain is Polyribonucleotide nucleotidyltransferase, found in Francisella tularensis subsp. novicida (strain U112).